The chain runs to 453 residues: Carbamoyl phosphate synthase arginine-specific small chain (453 aa).

Residues 1–28 constitute a mitochondrion transit peptide; it reads MFARVFKAMPARASALTSVNASIPARFM. Residues 219–406 enclose the Glutamine amidotransferase type-1 domain; that stretch reads HVAVIDCGVK…IDSVKKYKAS (188 aa). The active-site Nucleophile is the Cys-295. Residues His-379 and Glu-381 contribute to the active site.

This sequence belongs to the CarA family. As to quaternary structure, heterodimer composed of 2 chains; the small (or glutamine) chain promotes the hydrolysis of glutamine to ammonia, which is used by the large (or ammonia) chain to synthesize carbamoyl phosphate.

It localises to the mitochondrion matrix. It carries out the reaction hydrogencarbonate + L-glutamine + 2 ATP + H2O = carbamoyl phosphate + L-glutamate + 2 ADP + phosphate + 2 H(+). The catalysed reaction is L-glutamine + H2O = L-glutamate + NH4(+). The protein operates within amino-acid biosynthesis; L-arginine biosynthesis; carbamoyl phosphate from bicarbonate: step 1/1. Small subunit of the arginine-specific carbamoyl phosphate synthase (CPSase). CPSase catalyzes the formation of carbamoyl phosphate from the ammonia moiety of glutamine, carbonate, and phosphate donated by ATP, the first step of the arginine biosynthetic pathway. The small subunit (glutamine amidotransferase) binds and cleaves glutamine to supply the large subunit with the substrate ammonia. The sequence is that of Carbamoyl phosphate synthase arginine-specific small chain (cpa1) from Aspergillus fumigatus (strain ATCC MYA-4609 / CBS 101355 / FGSC A1100 / Af293) (Neosartorya fumigata).